We begin with the raw amino-acid sequence, 71 residues long: UPF0346 protein str0441 (71 aa).

Belongs to the UPF0346 family.

In Streptococcus thermophilus (strain CNRZ 1066), this protein is UPF0346 protein str0441.